We begin with the raw amino-acid sequence, 279 residues long: Thymidylate synthase (279 aa).

Residue 133–134 (RR) coordinates dUMP. The active-site Nucleophile is Cys-154. DUMP contacts are provided by residues 178 to 181 (RSND), Asn-189, and 219 to 221 (HIY). Asp-181 serves as a coordination point for (6R)-5,10-methylene-5,6,7,8-tetrahydrofolate. Ala-278 contributes to the (6R)-5,10-methylene-5,6,7,8-tetrahydrofolate binding site.

It belongs to the thymidylate synthase family. Bacterial-type ThyA subfamily. As to quaternary structure, homodimer.

The protein localises to the cytoplasm. The catalysed reaction is dUMP + (6R)-5,10-methylene-5,6,7,8-tetrahydrofolate = 7,8-dihydrofolate + dTMP. It participates in pyrimidine metabolism; dTTP biosynthesis. In terms of biological role, catalyzes the reductive methylation of 2'-deoxyuridine-5'-monophosphate (dUMP) to 2'-deoxythymidine-5'-monophosphate (dTMP) while utilizing 5,10-methylenetetrahydrofolate (mTHF) as the methyl donor and reductant in the reaction, yielding dihydrofolate (DHF) as a by-product. This enzymatic reaction provides an intracellular de novo source of dTMP, an essential precursor for DNA biosynthesis. This is Thymidylate synthase from Streptococcus mutans serotype c (strain ATCC 700610 / UA159).